A 244-amino-acid polypeptide reads, in one-letter code: tRNA pseudouridine synthase A (244 aa).

The active-site Nucleophile is the D52. Residue Y110 coordinates substrate.

It belongs to the tRNA pseudouridine synthase TruA family. As to quaternary structure, homodimer.

It catalyses the reaction uridine(38/39/40) in tRNA = pseudouridine(38/39/40) in tRNA. Its function is as follows. Formation of pseudouridine at positions 38, 39 and 40 in the anticodon stem and loop of transfer RNAs. The sequence is that of tRNA pseudouridine synthase A from Brevibacillus brevis (strain 47 / JCM 6285 / NBRC 100599).